Consider the following 434-residue polypeptide: Histidinol dehydrogenase (434 aa).

Zn(2+)-binding residues include Glu260 and His263. Active-site proton acceptor residues include Glu330 and His331. His423 provides a ligand contact to Zn(2+).

This sequence belongs to the histidinol dehydrogenase family. It depends on Zn(2+) as a cofactor.

The enzyme catalyses L-histidinol + 2 NAD(+) + H2O = L-histidine + 2 NADH + 3 H(+). It functions in the pathway amino-acid biosynthesis; L-histidine biosynthesis; L-histidine from 5-phospho-alpha-D-ribose 1-diphosphate: step 9/9. Functionally, catalyzes the sequential NAD-dependent oxidations of L-histidinol to L-histidinaldehyde and then to L-histidine. In Synechocystis sp. (strain ATCC 27184 / PCC 6803 / Kazusa), this protein is Histidinol dehydrogenase (hisD).